The following is a 109-amino-acid chain: Short-chain dehydrogenase/reductase homolog YusS (109 aa).

This sequence belongs to the short-chain dehydrogenases/reductases (SDR) family.

The sequence is that of Short-chain dehydrogenase/reductase homolog YusS (yusS) from Bacillus subtilis (strain 168).